Consider the following 244-residue polypeptide: Probable transcriptional regulatory protein CBU_1566 (244 aa).

This sequence belongs to the TACO1 family.

Its subcellular location is the cytoplasm. The sequence is that of Probable transcriptional regulatory protein CBU_1566 from Coxiella burnetii (strain RSA 493 / Nine Mile phase I).